A 189-amino-acid chain; its full sequence is CASP-like protein 1U2 (189 aa).

The Cytoplasmic portion of the chain corresponds to 1 to 24 (MFGSDDSGCHVMDDDVAPPANGSK). The chain crosses the membrane as a helical span at residues 25 to 45 (AVTLLLRLITLALALTSAVLM). At 46-71 (ATASECTIYGLDGATATTVTFKDYQP) the chain is on the extracellular side. Residues 72 to 92 (FIYLVGSNIAATILEVAAIYV) traverse the membrane as a helical segment. The Cytoplasmic portion of the chain corresponds to 93-109 (QVGKGDDVEDAPMIPRV). The chain crosses the membrane as a helical span at residues 110 to 130 (VLVVVDVAVQMLLYSATGAVF). Residues 131 to 158 (AAVMAYGPQISACTGAAGHFCEQVQRSK) are Extracellular-facing. A helical transmembrane segment spans residues 159-179 (IISLAASLSAVLAAVAKDVAL). The Cytoplasmic segment spans residues 180–189 (PCSVWPHPSS).

Belongs to the Casparian strip membrane proteins (CASP) family. Homodimer and heterodimers.

Its subcellular location is the cell membrane. The polypeptide is CASP-like protein 1U2 (Sorghum bicolor (Sorghum)).